A 314-amino-acid polypeptide reads, in one-letter code: Olfactory receptor 1468 (314 aa).

Residues 1–25 are Extracellular-facing; the sequence is MTEENQTVISQFLLLGLPIPSEHQH. The N-linked (GlcNAc...) asparagine glycan is linked to N5. Residues 26–49 traverse the membrane as a helical segment; sequence VFYALFLSMYLTTVLGNLIIIILI. Over 50–57 the chain is Cytoplasmic; it reads HLDSHLHT. A helical transmembrane segment spans residues 58-79; the sequence is PMYLFLSNLSFSDLCFSSVTMP. The Extracellular portion of the chain corresponds to 80–100; sequence KLLQNMQSQVPSIPFAGCLTQ. A disulfide bridge links C97 with C189. The helical transmembrane segment at 101–120 threads the bilayer; sequence LYFYLYFADLESFLLVAMAY. Topologically, residues 121-139 are cytoplasmic; it reads DRYVAICFPLHYMSIMSPK. A helical transmembrane segment spans residues 140-158; it reads LCVSLVVLSWVLTTFHAML. Topologically, residues 159–196 are extracellular; sequence HTLLMARLSFCADNMIPHFFCDISPLLKLSCSDTHVNE. Residues 197-219 form a helical membrane-spanning segment; sequence LVIFVMGGLVIVIPFVLIIVSYA. Over 220-236 the chain is Cytoplasmic; the sequence is RVVASILKVPSVRGIHK. A helical membrane pass occupies residues 237 to 260; sequence IFSTCGSHLSVVSLFYGTIIGLYL. Topologically, residues 261-272 are extracellular; sequence CPSANNSTVKET. A helical membrane pass occupies residues 273-292; sequence VMAMMYTVVTPMLNPFIYSL. Residues 293-314 lie on the Cytoplasmic side of the membrane; sequence RNRDMKEALIRVLCKKKITFCL.

It belongs to the G-protein coupled receptor 1 family. Olfactory epithelium.

It localises to the cell membrane. In terms of biological role, odorant receptor. The protein is Olfactory receptor 1468 (Olr1468) of Rattus norvegicus (Rat).